The chain runs to 541 residues: Chaperonin GroEL (541 aa).

Residues 29 to 32, 86 to 90, G413, and D495 contribute to the ATP site; these read TLGP and DGTTT.

Belongs to the chaperonin (HSP60) family. Forms a cylinder of 14 subunits composed of two heptameric rings stacked back-to-back. Interacts with the co-chaperonin GroES.

The protein resides in the cytoplasm. It catalyses the reaction ATP + H2O + a folded polypeptide = ADP + phosphate + an unfolded polypeptide.. Functionally, together with its co-chaperonin GroES, plays an essential role in assisting protein folding. The GroEL-GroES system forms a nano-cage that allows encapsulation of the non-native substrate proteins and provides a physical environment optimized to promote and accelerate protein folding. This chain is Chaperonin GroEL, found in Thermoanaerobacter pseudethanolicus (strain ATCC 33223 / 39E) (Clostridium thermohydrosulfuricum).